The chain runs to 400 residues: Phosphoglycerate kinase (400 aa).

Substrate is bound by residues 22–24 (DLN), arginine 37, 60–63 (HLGR), arginine 119, and arginine 159. ATP contacts are provided by residues lysine 209, glycine 297, glutamate 328, and 354 to 357 (GGDS).

Belongs to the phosphoglycerate kinase family. Monomer.

Its subcellular location is the cytoplasm. It carries out the reaction (2R)-3-phosphoglycerate + ATP = (2R)-3-phospho-glyceroyl phosphate + ADP. The protein operates within carbohydrate degradation; glycolysis; pyruvate from D-glyceraldehyde 3-phosphate: step 2/5. The sequence is that of Phosphoglycerate kinase from Saccharopolyspora erythraea (strain ATCC 11635 / DSM 40517 / JCM 4748 / NBRC 13426 / NCIMB 8594 / NRRL 2338).